The following is a 236-amino-acid chain: 1-(5-phosphoribosyl)-5-[(5-phosphoribosylamino)methylideneamino] imidazole-4-carboxamide isomerase (236 aa).

Aspartate 8 acts as the Proton acceptor in catalysis. The active-site Proton donor is aspartate 127.

The protein belongs to the HisA/HisF family.

The protein localises to the cytoplasm. The enzyme catalyses 1-(5-phospho-beta-D-ribosyl)-5-[(5-phospho-beta-D-ribosylamino)methylideneamino]imidazole-4-carboxamide = 5-[(5-phospho-1-deoxy-D-ribulos-1-ylimino)methylamino]-1-(5-phospho-beta-D-ribosyl)imidazole-4-carboxamide. The protein operates within amino-acid biosynthesis; L-histidine biosynthesis; L-histidine from 5-phospho-alpha-D-ribose 1-diphosphate: step 4/9. This Campylobacter fetus subsp. fetus (strain 82-40) protein is 1-(5-phosphoribosyl)-5-[(5-phosphoribosylamino)methylideneamino] imidazole-4-carboxamide isomerase.